A 276-amino-acid polypeptide reads, in one-letter code: 4-deoxy-L-threo-5-hexosulose-uronate ketol-isomerase 2 (276 aa).

The Zn(2+) site is built by His194, His196, Glu201, and His243.

Belongs to the KduI family. Zn(2+) serves as cofactor.

The enzyme catalyses 5-dehydro-4-deoxy-D-glucuronate = 3-deoxy-D-glycero-2,5-hexodiulosonate. It functions in the pathway glycan metabolism; pectin degradation; 2-dehydro-3-deoxy-D-gluconate from pectin: step 4/5. Functionally, catalyzes the isomerization of 5-dehydro-4-deoxy-D-glucuronate to 3-deoxy-D-glycero-2,5-hexodiulosonate. The chain is 4-deoxy-L-threo-5-hexosulose-uronate ketol-isomerase 2 (kduI2) from Enterococcus faecalis (strain ATCC 700802 / V583).